Here is a 134-residue protein sequence, read N- to C-terminus: Arsenate reductase (134 aa).

Residues Cys11, Cys83, and Cys90 each act as nucleophile in the active site. Disulfide bonds link Cys11-Cys83 and Cys83-Cys90.

It belongs to the low molecular weight phosphotyrosine protein phosphatase family. Thioredoxin-coupled ArsC subfamily.

The protein resides in the cytoplasm. The enzyme catalyses arsenate + [thioredoxin]-dithiol + H(+) = arsenite + [thioredoxin]-disulfide + H2O. Functionally, catalyzes the reduction of arsenate [As(V)] to arsenite [As(III)]. The polypeptide is Arsenate reductase (Bacillus cereus (strain 03BB102)).